A 251-amino-acid chain; its full sequence is Eukaryotic translation initiation factor 3 subunit K (251 aa).

Residues 46–224 (FDCYANLALL…VKVPTNKENE (179 aa)) enclose the PCI domain.

This sequence belongs to the eIF-3 subunit K family. Component of the eukaryotic translation initiation factor 3 (eIF-3) complex.

The protein localises to the cytoplasm. Component of the eukaryotic translation initiation factor 3 (eIF-3) complex, which is involved in protein synthesis of a specialized repertoire of mRNAs and, together with other initiation factors, stimulates binding of mRNA and methionyl-tRNAi to the 40S ribosome. The eIF-3 complex specifically targets and initiates translation of a subset of mRNAs involved in cell proliferation. The chain is Eukaryotic translation initiation factor 3 subunit K from Aspergillus oryzae (strain ATCC 42149 / RIB 40) (Yellow koji mold).